Reading from the N-terminus, the 701-residue chain is Elongation factor G 1 (701 aa).

The tr-type G domain occupies 5 to 281 (SKYRNIGIFA…AVVDYLPSPT (277 aa)). Residues 14–21 (AHVDAGKT), 78–82 (DTPGH), and 132–135 (NKLD) contribute to the GTP site.

The protein belongs to the TRAFAC class translation factor GTPase superfamily. Classic translation factor GTPase family. EF-G/EF-2 subfamily.

Its subcellular location is the cytoplasm. Functionally, catalyzes the GTP-dependent ribosomal translocation step during translation elongation. During this step, the ribosome changes from the pre-translocational (PRE) to the post-translocational (POST) state as the newly formed A-site-bound peptidyl-tRNA and P-site-bound deacylated tRNA move to the P and E sites, respectively. Catalyzes the coordinated movement of the two tRNA molecules, the mRNA and conformational changes in the ribosome. This chain is Elongation factor G 1, found in Colwellia psychrerythraea (strain 34H / ATCC BAA-681) (Vibrio psychroerythus).